A 1069-amino-acid chain; its full sequence is Acyl-CoA dehydrogenase family member 10 (1069 aa).

Residue Lys413 is modified to N6-succinyllysine. N6-acetyllysine; alternate is present on Lys427. Lys427 is modified (N6-succinyllysine; alternate). Residues 792–802 (FAMTEPQVASS), Ser828, Arg943, Gln1013, and Glu1044 each bind FAD. Position 1052 is an N6-acetyllysine; alternate (Lys1052). Lys1052 is subject to N6-succinyllysine; alternate.

This sequence belongs to the acyl-CoA dehydrogenase family. FAD serves as cofactor.

The enzyme catalyses a 2,3-saturated acyl-CoA + A = a 2,3-dehydroacyl-CoA + AH2. Acyl-CoA dehydrogenase only active with R- and S-2-methyl-C15-CoA. In Mus musculus (Mouse), this protein is Acyl-CoA dehydrogenase family member 10 (Acad10).